The sequence spans 350 residues: Methylthioribose-1-phosphate isomerase (350 aa).

Substrate contacts are provided by residues 47–49 (RGA), arginine 89, and glutamine 196. Catalysis depends on aspartate 237, which acts as the Proton donor. 247 to 248 (NK) contributes to the substrate binding site.

Belongs to the eIF-2B alpha/beta/delta subunits family. MtnA subfamily.

The catalysed reaction is 5-(methylsulfanyl)-alpha-D-ribose 1-phosphate = 5-(methylsulfanyl)-D-ribulose 1-phosphate. The protein operates within amino-acid biosynthesis; L-methionine biosynthesis via salvage pathway; L-methionine from S-methyl-5-thio-alpha-D-ribose 1-phosphate: step 1/6. Functionally, catalyzes the interconversion of methylthioribose-1-phosphate (MTR-1-P) into methylthioribulose-1-phosphate (MTRu-1-P). This is Methylthioribose-1-phosphate isomerase from Nitratidesulfovibrio vulgaris (strain DSM 19637 / Miyazaki F) (Desulfovibrio vulgaris).